The sequence spans 76 residues: UPF0352 protein ECA2748 (76 aa).

The protein belongs to the UPF0352 family.

This chain is UPF0352 protein ECA2748, found in Pectobacterium atrosepticum (strain SCRI 1043 / ATCC BAA-672) (Erwinia carotovora subsp. atroseptica).